The chain runs to 498 residues: Cytochrome P450 71B5 (498 aa).

A helical membrane pass occupies residues 3-23 (IFLCFLLLLPLSLIFLKKLLP). Cysteine 439 contributes to the heme binding site.

Belongs to the cytochrome P450 family. The cofactor is heme.

It is found in the membrane. The protein is Cytochrome P450 71B5 (CYP71B5) of Arabidopsis thaliana (Mouse-ear cress).